The chain runs to 334 residues: Probable fructose-bisphosphate aldolase class 1 (334 aa).

This sequence belongs to the class I fructose-bisphosphate aldolase family.

The enzyme catalyses beta-D-fructose 1,6-bisphosphate = D-glyceraldehyde 3-phosphate + dihydroxyacetone phosphate. It functions in the pathway carbohydrate degradation; glycolysis; D-glyceraldehyde 3-phosphate and glycerone phosphate from D-glucose: step 4/4. This Xylella fastidiosa (strain Temecula1 / ATCC 700964) protein is Probable fructose-bisphosphate aldolase class 1.